A 214-amino-acid chain; its full sequence is Small ribosomal subunit protein eS6 (214 aa).

The protein belongs to the eukaryotic ribosomal protein eS6 family.

The polypeptide is Small ribosomal subunit protein eS6 (rps6e) (Saccharolobus islandicus (strain Y.G.57.14 / Yellowstone #1) (Sulfolobus islandicus)).